The chain runs to 103 residues: Small ribosomal subunit protein uS10 (103 aa).

Belongs to the universal ribosomal protein uS10 family. Part of the 30S ribosomal subunit.

In terms of biological role, involved in the binding of tRNA to the ribosomes. The chain is Small ribosomal subunit protein uS10 from Escherichia coli O127:H6 (strain E2348/69 / EPEC).